We begin with the raw amino-acid sequence, 334 residues long: GTPase Obg (334 aa).

Residues 4–162 (FDFIDEVKKY…GWIKLELKLL (159 aa)) enclose the Obg domain. The OBG-type G domain occupies 163–330 (AEVGLVGFPN…FKDKIWKLLH (168 aa)). Residues 169 to 176 (GFPNAGKS), 194 to 198 (FTTLV), 216 to 219 (DMPG), 284 to 287 (SKLD), and 311 to 313 (SSV) each bind GTP. Serine 176 and threonine 196 together coordinate Mg(2+).

The protein belongs to the TRAFAC class OBG-HflX-like GTPase superfamily. OBG GTPase family. As to quaternary structure, monomer. Mg(2+) serves as cofactor.

Its subcellular location is the cytoplasm. An essential GTPase which binds GTP, GDP and possibly (p)ppGpp with moderate affinity, with high nucleotide exchange rates and a fairly low GTP hydrolysis rate. Plays a role in control of the cell cycle, stress response, ribosome biogenesis and in those bacteria that undergo differentiation, in morphogenesis control. The chain is GTPase Obg from Amoebophilus asiaticus (strain 5a2).